Here is a 223-residue protein sequence, read N- to C-terminus: uncharacterized protein (223 aa).

One can recognise an HTH tetR-type domain in the interval 11–71 (EATFESFIDA…YLLEKRQMKK (61 aa)). The segment at residues 34–53 (SVEDISRAAGYSKGAFYVHF) is a DNA-binding region (H-T-H motif).

This is an uncharacterized protein from Bacillus subtilis (strain 168).